The following is a 231-amino-acid chain: Phosphatidate cytidylyltransferase (231 aa).

The next 6 membrane-spanning stretches (helical) occupy residues 33 to 53 (FVVA…LVAI), 67 to 87 (IMYL…LIFL), 95 to 115 (WLIM…MIGG), 133 to 153 (WSGL…ISFI), 167 to 187 (IYLF…DLFI), and 206 to 226 (HGGV…LFFI).

Belongs to the CDS family.

Its subcellular location is the cell membrane. It carries out the reaction a 1,2-diacyl-sn-glycero-3-phosphate + CTP + H(+) = a CDP-1,2-diacyl-sn-glycerol + diphosphate. Its pathway is phospholipid metabolism; CDP-diacylglycerol biosynthesis; CDP-diacylglycerol from sn-glycerol 3-phosphate: step 3/3. This Rickettsia bellii (strain RML369-C) protein is Phosphatidate cytidylyltransferase (cdsA).